The sequence spans 39 residues: Large ribosomal subunit protein bL36 (39 aa).

It belongs to the bacterial ribosomal protein bL36 family.

The chain is Large ribosomal subunit protein bL36 from Limosilactobacillus reuteri (strain DSM 20016) (Lactobacillus reuteri).